The sequence spans 113 residues: ATP-dependent Clp protease adapter protein ClpS (113 aa).

Positions 1-11 are enriched in basic and acidic residues; that stretch reads MHRDLHMMSDR. The interval 1 to 25 is disordered; it reads MHRDLHMMSDRSEDDGDTSILTATK.

It belongs to the ClpS family. Binds to the N-terminal domain of the chaperone ClpA.

In terms of biological role, involved in the modulation of the specificity of the ClpAP-mediated ATP-dependent protein degradation. In Roseobacter denitrificans (strain ATCC 33942 / OCh 114) (Erythrobacter sp. (strain OCh 114)), this protein is ATP-dependent Clp protease adapter protein ClpS.